Consider the following 153-residue polypeptide: UPF0540 protein At1g62220 (153 aa).

Positions 1–21 (MNATKFVVLLVISVLCAIVTA) are cleaved as a signal peptide. 2 disordered regions span residues 63-82 (SSAT…YENG) and 122-153 (ARAN…GKKD). Over residues 122–132 (ARANGKVASAS) the composition is skewed to low complexity. The span at 141-153 (KKGKGKKGKGKKD) shows a compositional bias: basic residues.

The protein belongs to the UPF0540 family.

This is UPF0540 protein At1g62220 from Arabidopsis thaliana (Mouse-ear cress).